The primary structure comprises 313 residues: Ribosomal protein L11 methyltransferase (313 aa).

Residues T164, G185, D207, and N249 each coordinate S-adenosyl-L-methionine.

It belongs to the methyltransferase superfamily. PrmA family.

Its subcellular location is the cytoplasm. It carries out the reaction L-lysyl-[protein] + 3 S-adenosyl-L-methionine = N(6),N(6),N(6)-trimethyl-L-lysyl-[protein] + 3 S-adenosyl-L-homocysteine + 3 H(+). Methylates ribosomal protein L11. In Clostridium botulinum (strain Alaska E43 / Type E3), this protein is Ribosomal protein L11 methyltransferase.